The chain runs to 435 residues: NADH-quinone oxidoreductase subunit D (435 aa).

This sequence belongs to the complex I 49 kDa subunit family. As to quaternary structure, NDH-1 is composed of 14 different subunits. Subunits NuoB, C, D, E, F, and G constitute the peripheral sector of the complex.

The protein localises to the cell inner membrane. The catalysed reaction is a quinone + NADH + 5 H(+)(in) = a quinol + NAD(+) + 4 H(+)(out). Functionally, NDH-1 shuttles electrons from NADH, via FMN and iron-sulfur (Fe-S) centers, to quinones in the respiratory chain. The immediate electron acceptor for the enzyme in this species is believed to be ubiquinone. Couples the redox reaction to proton translocation (for every two electrons transferred, four hydrogen ions are translocated across the cytoplasmic membrane), and thus conserves the redox energy in a proton gradient. In Xanthomonas oryzae pv. oryzae (strain MAFF 311018), this protein is NADH-quinone oxidoreductase subunit D.